The chain runs to 313 residues: Olfactory receptor 8C8 (313 aa).

Residues 1–27 (MMQITMENKSSVSEFILMGLTDQPELQ) lie on the Extracellular side of the membrane. The N-linked (GlcNAc...) asparagine glycan is linked to Asn8. Residues 28-48 (LPLFVLFLMNYTATVMGNLTL) form a helical membrane-spanning segment. The Cytoplasmic segment spans residues 49–59 (MNLICLNSNLH). A helical transmembrane segment spans residues 60–80 (TPMYFFLFNLSFIDFCYSMVF). Residues 81-96 (TPKMLMSFILEKNTIS) lie on the Extracellular side of the membrane. A helical transmembrane segment spans residues 97–117 (FGGCMAQLFFFLFFVNSESYV). Cys100 and Cys192 are joined by a disulfide. Residues 118–136 (LTAMAYDRYVAICKPLTYK) lie on the Cytoplasmic side of the membrane. The chain crosses the membrane as a helical span at residues 137–157 (VIMSPKICCLLIFSSYLMGFA). The Extracellular segment spans residues 158-208 (SAMAHTGCMIRLSFCDSNIINHYMCDIFPLLPLSCSSTYVNELMSSVVVGS). The helical transmembrane segment at 209 to 229 (AIILCCLIILISYAMILFNII) threads the bilayer. Topologically, residues 230–239 (HMSSGKGWSK) are cytoplasmic. Residues 240 to 260 (ALGTCGSHIITVSLFYGSGLL) traverse the membrane as a helical segment. Topologically, residues 261–274 (AYVKPSSAKTVGQG) are extracellular. The chain crosses the membrane as a helical span at residues 275-295 (KFFSVFYTLLVPMLNPLIYSL). Topologically, residues 296–313 (RNKDVKLAVKKTWKRITS) are cytoplasmic.

It belongs to the G-protein coupled receptor 1 family. Expressed in neurons in the olfactory epithelium.

The protein localises to the cell membrane. Its function is as follows. Potential odorant receptor. The chain is Olfactory receptor 8C8 from Mus musculus (Mouse).